The chain runs to 172 residues: MILNEDIRAREVRLIGVDGQQVGVVSKNEALRKAADADLDLVLLSPNAKPPVARIMDYGKFRFEQQKKAKENRKNQKVMAVKEIRLSPTIEGNDFDTKLKHVRKFLTKGAKVRVSIRFRGRAITHKELGKQVLEKMADEASDLSNVVTKPKMEGRSMFLMLAPLSEKDKKKK.

It belongs to the IF-3 family. In terms of assembly, monomer.

The protein resides in the cytoplasm. Its function is as follows. IF-3 binds to the 30S ribosomal subunit and shifts the equilibrium between 70S ribosomes and their 50S and 30S subunits in favor of the free subunits, thus enhancing the availability of 30S subunits on which protein synthesis initiation begins. The protein is Translation initiation factor IF-3 of Lactobacillus johnsonii (strain CNCM I-12250 / La1 / NCC 533).